A 78-amino-acid chain; its full sequence is Structural DNA-binding protein p10 (78 aa).

Over residues 1-25 the composition is skewed to low complexity; the sequence is MPTKAGTKSTANKKTTKGSSKSGSA. Positions 1–41 are disordered; sequence MPTKAGTKSTANKKTTKGSSKSGSARGHTGKTHAPPSMHSG.

Belongs to the asfivirus P10 family.

It is found in the virion. Its function is as follows. May play a role in genome packaging through direct interaction with viral DNA. Binds to ssDNA and dsDNA with the same apparent affinity in vitro. The sequence is that of Structural DNA-binding protein p10 from African swine fever virus (isolate Warthog/Namibia/Wart80/1980) (ASFV).